The primary structure comprises 526 residues: Glutamate--cysteine ligase (526 aa).

Belongs to the glutamate--cysteine ligase type 1 family. Type 1 subfamily.

The enzyme catalyses L-cysteine + L-glutamate + ATP = gamma-L-glutamyl-L-cysteine + ADP + phosphate + H(+). Its pathway is sulfur metabolism; glutathione biosynthesis; glutathione from L-cysteine and L-glutamate: step 1/2. The polypeptide is Glutamate--cysteine ligase (Proteus mirabilis (strain HI4320)).